The sequence spans 474 residues: Glutamate--tRNA ligase (474 aa).

The 'HIGH' region motif lies at 11–21 (PSPTGFLHIGG). A 'KMSKS' region motif is present at residues 240 to 244 (KLSKR). Residue K243 participates in ATP binding.

This sequence belongs to the class-I aminoacyl-tRNA synthetase family. Glutamate--tRNA ligase type 1 subfamily. In terms of assembly, monomer.

The protein resides in the cytoplasm. The enzyme catalyses tRNA(Glu) + L-glutamate + ATP = L-glutamyl-tRNA(Glu) + AMP + diphosphate. In terms of biological role, catalyzes the attachment of glutamate to tRNA(Glu) in a two-step reaction: glutamate is first activated by ATP to form Glu-AMP and then transferred to the acceptor end of tRNA(Glu). This chain is Glutamate--tRNA ligase, found in Bradyrhizobium sp. (strain BTAi1 / ATCC BAA-1182).